The chain runs to 210 residues: Urease accessory protein UreG (210 aa).

14–21 (GPVGSGKT) is a GTP binding site.

It belongs to the SIMIBI class G3E GTPase family. UreG subfamily. Homodimer. UreD, UreF and UreG form a complex that acts as a GTP-hydrolysis-dependent molecular chaperone, activating the urease apoprotein by helping to assemble the nickel containing metallocenter of UreC. The UreE protein probably delivers the nickel.

Its subcellular location is the cytoplasm. Functionally, facilitates the functional incorporation of the urease nickel metallocenter. This process requires GTP hydrolysis, probably effectuated by UreG. The polypeptide is Urease accessory protein UreG (Rhodopseudomonas palustris (strain BisA53)).